We begin with the raw amino-acid sequence, 1888 residues long: Zinc finger protein 106 (1888 aa).

The C2H2-type 1; atypical zinc-finger motif lies at 5–29; that stretch reads RKCILCHIVYGSKKEMDEHMRSMLH. Residues 43–67 form a C2H2-type 2; atypical zinc finger; the sequence is HECRVCRVTEVGLSAYAKHISGQLH. Residues 68–187 are disordered; the sequence is KDNVDAQERE…GPRGSSVWHK (120 aa). Positions 75–89 are enriched in acidic residues; the sequence is EREDDGKEEEEEEYF. Basic and acidic residues-rich tracts occupy residues 90-108, 118-138, and 150-160; these read DKELVQLIQERKEQSRQDE, SDDRQPQWRREDRIPYQDRES, and PQRDWKWEKDG. K91 is covalently cross-linked (Glycyl lysine isopeptide (Lys-Gly) (interchain with G-Cter in SUMO2)). Residue K155 forms a Glycyl lysine isopeptide (Lys-Gly) (interchain with G-Cter in SUMO2) linkage. The segment covering 161-175 has biased composition (polar residues); the sequence is FNSTRKNSFPHSLRN. Residues K265 and K309 each participate in a glycyl lysine isopeptide (Lys-Gly) (interchain with G-Cter in SUMO2) cross-link. Disordered regions lie at residues 287–326 and 338–362; these read KKSNKPSKYSQERCKWQRQDRDKAAKYRSPPEGYASDTFP and RESQTTKQTDTAASKINGKNGTKAR. The span at 296–311 shows a compositional bias: basic and acidic residues; sequence SQERCKWQRQDRDKAA. The segment covering 342–357 has biased composition (polar residues); sequence TTKQTDTAASKINGKN. Glycyl lysine isopeptide (Lys-Gly) (interchain with G-Cter in SUMO2) cross-links involve residues K375, K384, K390, K435, K469, and K479. 2 disordered regions span residues 410 to 437 and 453 to 525; these read KPVDKTSNPPVIKTQKAGPPGSPSHKAI and TEQS…TSKS. Over residues 481–491 the composition is skewed to basic residues; the sequence is GPHKQNLKNRS. Over residues 507-525 the composition is skewed to polar residues; it reads LLNTSTLEGSHGSSYTSKS. Residues K524, K534, and K544 each participate in a glycyl lysine isopeptide (Lys-Gly) (interchain with G-Cter in SUMO2) cross-link. The disordered stretch occupies residues 537–617; that stretch reads KTVSGTQKEP…SAMTSDAENH (81 aa). A compositionally biased stretch (polar residues) spans 551–572; the sequence is NNTSQKAQDTVLQCPKTLQNPL. A Glycyl lysine isopeptide (Lys-Gly) (interchain with G-Cter in SUMO2) cross-link involves residue K577. A compositionally biased stretch (basic and acidic residues) spans 577-593; the sequence is KRMENDAKESSVEESAK. Polar residues predominate over residues 597-613; sequence SIESQPHSAGNSAMTSD. K620 is covalently cross-linked (Glycyl lysine isopeptide (Lys-Gly) (interchain with G-Cter in SUMO2)). A disordered region spans residues 635-661; that stretch reads STHTVDKEQGSQIPGTPENLSTSPRNS. Polar residues predominate over residues 644–661; that stretch reads GSQIPGTPENLSTSPRNS. Residues S657 and S677 each carry the phosphoserine modification. Residues K687, K700, K721, K738, K758, K792, and K824 each participate in a glycyl lysine isopeptide (Lys-Gly) (interchain with G-Cter in SUMO2) cross-link. The segment at 696-728 is disordered; the sequence is NNLVKSDGPFETESFEDTSLDTELQKPDLNNQP. Phosphoserine occurs at positions 876, 878, 881, and 909. The segment at 894–920 is disordered; sequence TGEGTGKENEAQQSPSPNTALSAAQSQ. Polar residues predominate over residues 904–920; that stretch reads AQQSPSPNTALSAAQSQ. K921 participates in a covalent cross-link: Glycyl lysine isopeptide (Lys-Gly) (interchain with G-Cter in SUMO2). Phosphoserine is present on S953. The segment covering 968-986 has biased composition (basic and acidic residues); sequence ARDLHSQERSTPLSERHAQ. Disordered regions lie at residues 968-1064, 1281-1461, and 1468-1487; these read ARDL…ERSQ, EQGN…SKKD, and QNPIETSRSGCDEVSSTSEL. The span at 992–1008 shows a compositional bias: low complexity; it reads GNSLSSNASSGHAVSSL. Positions 1013–1022 are enriched in polar residues; that stretch reads TDSSCTSGAE. At T1036 the chain carries Phosphothreonine. A phosphoserine mark is found at S1040, S1041, and S1046. The segment covering 1050-1060 has biased composition (basic residues); the sequence is KNKRRKIKGKK. The span at 1281 to 1296 shows a compositional bias: polar residues; sequence EQGNSRSKGNSPSCQS. 3 positions are modified to phosphoserine: S1291, S1293, and S1296. K1310 participates in a covalent cross-link: Glycyl lysine isopeptide (Lys-Gly) (interchain with G-Cter in SUMO2). The span at 1312 to 1321 shows a compositional bias: low complexity; it reads SSGSEACSSS. Position 1313 is a phosphoserine (S1313). Residue K1335 forms a Glycyl lysine isopeptide (Lys-Gly) (interchain with G-Cter in SUMO2) linkage. The span at 1338–1354 shows a compositional bias: polar residues; it reads QSPADQPEQQAESTLAS. Phosphoserine is present on S1339. Basic residues predominate over residues 1360 to 1373; that stretch reads SKKKKKLRKKKTLR. Phosphoserine is present on S1381. Position 1383 is a phosphothreonine (T1383). Residues K1391, K1403, K1406, and K1460 each participate in a glycyl lysine isopeptide (Lys-Gly) (interchain with G-Cter in SUMO2) cross-link. Positions 1450-1461 are enriched in basic and acidic residues; sequence GDEKPDSPSKKD. The segment covering 1470–1487 has biased composition (polar residues); the sequence is PIETSRSGCDEVSSTSEL. Position 1474 is a phosphoserine (S1474). Glycyl lysine isopeptide (Lys-Gly) (interchain with G-Cter in SUMO2) cross-links involve residues K1492 and K1509. Residues 1509 to 1531 are disordered; that stretch reads KASKHSSEISSEPGDDEEPTEGS. WD repeat units lie at residues 1534 to 1573, 1575 to 1618, 1659 to 1700, 1703 to 1742, 1743 to 1780, and 1783 to 1820; these read GHQAAVNAIQIFGNFLYTCSADTTVRVYNLVSRKCVGVFE, HTSK…EQLQ, HGPR…LLRT, GHSKTVLCMKVVNDLVFSGSSDQSVHAHNIHTGELVRIYK, GHNHAVTVVNILGKVMVTACLDKFVRVYELQSHDRLQV, and GHKDMIMCMTIHKSVIYTGCYDGSIQAVRLNLMQNYRC. K1590 participates in a covalent cross-link: Glycyl lysine isopeptide (Lys-Gly) (interchain with G-Cter in SUMO2). K1742 participates in a covalent cross-link: Glycyl lysine isopeptide (Lys-Gly) (interchain with G-Cter in SUMO2). The C2H2-type 3; atypical zinc-finger motif lies at 1818-1843; sequence YRCWWYGCTLIFGVVDHLKQHLLTDH. A Glycyl lysine isopeptide (Lys-Gly) (interchain with G-Cter in SUMO2) cross-link involves residue K1869.

Interacts with KNOP1. Interacts with TARDBP and NUP107. Interacts (via N-terminus) with RBM39. Interacts with the SH3 domains of FYN and GRB2. In terms of processing, phosphorylated by FYN in vitro. In terms of tissue distribution, widely expressed, with strongest expression in skeletal muscle, heart and brain (at protein level). Detected in spinal cord motor neurons.

The protein localises to the nucleus. It localises to the nucleolus. The protein resides in the nucleus speckle. Its function is as follows. RNA-binding protein. Specifically binds to 5'-GGGGCC-3' sequence repeats in RNA. Essential for maintenance of peripheral motor neuron and skeletal muscle function. Required for normal expression and/or alternative splicing of a number of genes in spinal cord and skeletal muscle, including the neurite outgrowth inhibitor RTN4. Also contributes to normal mitochondrial respiratory function in motor neurons, via an unknown mechanism. The polypeptide is Zinc finger protein 106 (Znf106) (Mus musculus (Mouse)).